The following is a 582-amino-acid chain: ATP-dependent lipid A-core flippase (582 aa).

5 helical membrane-spanning segments follow: residues L26 to L46, I68 to L88, Y140 to V160, W164 to V184, and G252 to P272. The ABC transmembrane type-1 domain occupies I27 to R310. One can recognise an ABC transporter domain in the interval I342–M578. G376–S383 lines the ATP pocket.

Belongs to the ABC transporter superfamily. Lipid exporter (TC 3.A.1.106) family. Homodimer.

The protein localises to the cell inner membrane. The enzyme catalyses ATP + H2O + lipid A-core oligosaccharideSide 1 = ADP + phosphate + lipid A-core oligosaccharideSide 2.. In terms of biological role, involved in lipopolysaccharide (LPS) biosynthesis. Translocates lipid A-core from the inner to the outer leaflet of the inner membrane. Transmembrane domains (TMD) form a pore in the inner membrane and the ATP-binding domain (NBD) is responsible for energy generation. The sequence is that of ATP-dependent lipid A-core flippase from Haemophilus ducreyi (strain 35000HP / ATCC 700724).